A 316-amino-acid chain; its full sequence is Protoheme IX farnesyltransferase (316 aa).

The next 9 helical transmembrane spans lie at 32–52, 53–73, 93–113, 116–136, 152–172, 180–200, 221–241, 252–271, and 289–309; these read VMSL…GHIN, PVLG…SGAL, IPAG…LSGF, VILG…TIFF, NIVI…ACVT, TVLF…LALF, VTKH…VLPS, LVAA…VWRM, and IFYL…AILV.

The protein belongs to the UbiA prenyltransferase family. Protoheme IX farnesyltransferase subfamily.

The protein resides in the cell inner membrane. It catalyses the reaction heme b + (2E,6E)-farnesyl diphosphate + H2O = Fe(II)-heme o + diphosphate. It participates in porphyrin-containing compound metabolism; heme O biosynthesis; heme O from protoheme: step 1/1. In terms of biological role, converts heme B (protoheme IX) to heme O by substitution of the vinyl group on carbon 2 of heme B porphyrin ring with a hydroxyethyl farnesyl side group. This is Protoheme IX farnesyltransferase from Rhizobium etli (strain ATCC 51251 / DSM 11541 / JCM 21823 / NBRC 15573 / CFN 42).